Reading from the N-terminus, the 65-residue chain is MNMKILVLVAVLCLVVSTHAERHSKTDMEDSPMIQERKCLPPGKPCYGATQKIPCCGVCSHNNCT.

The signal sequence occupies residues 1–20; the sequence is MNMKILVLVAVLCLVVSTHA. Residues 21–37 constitute a propeptide that is removed on maturation; sequence ERHSKTDMEDSPMIQER. Disulfide bonds link C39-C56, C46-C59, and C55-C64.

Belongs to the neurotoxin 36 family. 02 subfamily. In terms of tissue distribution, expressed by the venom gland.

The protein resides in the secreted. In terms of biological role, reversibly blocks N-type calcium channels (Cav2.2/CACNA1B) in rat dorsal root ganglion cells. Elicits no toxic symptoms in either vertebrates or invertebrates during a period of 48 hours post-injection, when it was assayed in vivo by direct injection into mice and cockroaches. In Cyriopagopus hainanus (Chinese bird spider), this protein is Hainantoxin-X.